A 169-amino-acid chain; its full sequence is Crossover junction endodeoxyribonuclease RuvC (169 aa).

Residues Asp11, Glu71, and Asp143 contribute to the active site. Mg(2+) contacts are provided by Asp11, Glu71, and Asp143.

It belongs to the RuvC family. Homodimer which binds Holliday junction (HJ) DNA. The HJ becomes 2-fold symmetrical on binding to RuvC with unstacked arms; it has a different conformation from HJ DNA in complex with RuvA. In the full resolvosome a probable DNA-RuvA(4)-RuvB(12)-RuvC(2) complex forms which resolves the HJ. The cofactor is Mg(2+).

The protein localises to the cytoplasm. It carries out the reaction Endonucleolytic cleavage at a junction such as a reciprocal single-stranded crossover between two homologous DNA duplexes (Holliday junction).. Functionally, the RuvA-RuvB-RuvC complex processes Holliday junction (HJ) DNA during genetic recombination and DNA repair. Endonuclease that resolves HJ intermediates. Cleaves cruciform DNA by making single-stranded nicks across the HJ at symmetrical positions within the homologous arms, yielding a 5'-phosphate and a 3'-hydroxyl group; requires a central core of homology in the junction. The consensus cleavage sequence is 5'-(A/T)TT(C/G)-3'. Cleavage occurs on the 3'-side of the TT dinucleotide at the point of strand exchange. HJ branch migration catalyzed by RuvA-RuvB allows RuvC to scan DNA until it finds its consensus sequence, where it cleaves and resolves the cruciform DNA. The sequence is that of Crossover junction endodeoxyribonuclease RuvC from Rhizobium etli (strain CIAT 652).